Reading from the N-terminus, the 250-residue chain is 5'-nucleotidase SurE (250 aa).

A divalent metal cation is bound by residues Asp8, Asp9, Ser40, and Asn94.

Belongs to the SurE nucleotidase family. A divalent metal cation is required as a cofactor.

It localises to the cytoplasm. It catalyses the reaction a ribonucleoside 5'-phosphate + H2O = a ribonucleoside + phosphate. In terms of biological role, nucleotidase that shows phosphatase activity on nucleoside 5'-monophosphates. The sequence is that of 5'-nucleotidase SurE from Wolbachia sp. subsp. Brugia malayi (strain TRS).